A 72-amino-acid polypeptide reads, in one-letter code: Aurein-2.2 (72 aa).

An N-terminal signal peptide occupies residues 1-22 (MAFLKKSLFLVLFLGLVSLSIC). Residues 23-49 (EKEKRQNEEDEDENEAANHEEGSEEKR) constitute a propeptide that is removed on maturation. The tract at residues 27-47 (RQNEEDEDENEAANHEEGSEE) is disordered. The span at 38-47 (AANHEEGSEE) shows a compositional bias: basic and acidic residues. At L65 the chain carries Leucine amide. A propeptide spanning residues 69-72 (NDLE) is cleaved from the precursor.

Amidation is essential for antibacterial activity against Gram-positive bacteria. Expressed by the skin dorsal glands.

The protein resides in the secreted. It localises to the target cell membrane. Functionally, amphipathic alpha-helical antimicrobial peptide with weak to moderate activity against Gram-positive bacteria, and no activity against Gram-negative bacteria. Probably acts by disturbing membrane functions with its amphipathic structure. Strongly inhibits the formation of NO by neuronal nitric oxide synthase (nNOS) at micromolar concentrations. Acts by a non-competitive mechanism, probably by binding to calcium/calmodulin and as a consequence blocking calmodulin attachment to nNOS. This is Aurein-2.2 from Ranoidea aurea (Green and golden bell frog).